Consider the following 1317-residue polypeptide: DNA-directed RNA polymerase subunit beta' (1317 aa).

Residues cysteine 60, cysteine 62, cysteine 75, and cysteine 78 each contribute to the Zn(2+) site. The Mg(2+) site is built by aspartate 535, aspartate 537, and aspartate 539. The Zn(2+) site is built by cysteine 890, cysteine 967, cysteine 974, and cysteine 977.

It belongs to the RNA polymerase beta' chain family. As to quaternary structure, the RNAP catalytic core consists of 2 alpha, 1 beta, 1 beta' and 1 omega subunit. When a sigma factor is associated with the core the holoenzyme is formed, which can initiate transcription. Requires Mg(2+) as cofactor. The cofactor is Zn(2+).

The enzyme catalyses RNA(n) + a ribonucleoside 5'-triphosphate = RNA(n+1) + diphosphate. Functionally, DNA-dependent RNA polymerase catalyzes the transcription of DNA into RNA using the four ribonucleoside triphosphates as substrates. In Nocardia farcinica (strain IFM 10152), this protein is DNA-directed RNA polymerase subunit beta'.